The chain runs to 2004 residues: Immunoglobulin A1 protease (2004 aa).

A signal peptide spans 1 to 42; sequence MEKYFGEKQERFSFRKLSVGLVSATISSLFFMSVLASSSVDA. The propeptide occupies 43–99; that stretch reads QETAGVHYKYVADSELSSEEKKQLVYDIPTYVENDDETYYLVYKLNSQNQLAELPNT. An LPXTG sorting signal motif is present at residues 96–100; the sequence is LPNTG. Thr99 bears the Pentaglycyl murein peptidoglycan amidated threonine mark. 2 consecutive transmembrane segments (helical) span residues 106 to 125 and 132 to 154; these read QALV…FAVS and KTVL…VHAL. Residues 155–2004 are Extracellular-facing; the sequence is ENHLLLNYNT…FRSSIFENKK (1850 aa). Disordered regions lie at residues 194–213, 235–305, 373–394, and 422–720; these read TTSE…PTKQ, QEQT…NPQD, EIVS…TKKT, and PELP…PEKT. Polar residues-rich tracts occupy residues 197–213 and 235–246; these read ESEV…PTKQ and QEQTPVSSTKPT. A compositionally biased stretch (basic and acidic residues) spans 276-296; it reads LAEHKNLETKKEEKISPKEKT. In terms of domain architecture, G5 spans 314–393; sequence KPELLYREET…PRIVEKGTKK (80 aa). Tandem repeats lie at residues 419–435, 436–452, and 453–469. The 3 X 17 AA approximate tandem repeats stretch occupies residues 419-469; that stretch reads AIQPELPEAVVSDKGEPEVQPTLPEAVVTDKGETEVQPESPDTVVSDKGEP. Residues 485-511 are compositionally biased toward basic and acidic residues; sequence VKPETPVEKTKEQGPEKTEEVPVKPTE. 2 stretches are compositionally biased toward polar residues: residues 516 to 529 and 538 to 572; these read NPNE…SIQE and EEST…SVGE. A compositionally biased stretch (basic and acidic residues) spans 574–591; that stretch reads NKPEHNDSKNENSEKTVE. 2 stretches are compositionally biased toward polar residues: residues 618–639 and 648–681; these read EETQ…SNKP and ESNQ…PSNG. Residues 682–699 show a composition bias toward low complexity; sequence NSTEDVSTESNTSNSNGN. The segment covering 700-720 has biased composition (basic and acidic residues); sequence EEIKQENELDPDKKVEEPEKT. His1645 provides a ligand contact to Zn(2+). Residue Glu1646 is part of the active site. Zn(2+) is bound by residues His1649 and Glu1669.

This sequence belongs to the peptidase M26 family. Zn(2+) serves as cofactor. The Gram-positive cell-wall anchor motif LPXTG is located in the N-terminal part, in contrast to such motifs in other known streptococcal and staphylococcal proteins. The protease could be cleaved by the sortase and anchored in the membrane via the two potential N-terminal transmembrane domains, whereas the propeptide located prior to the LPXTG motif would remain attached to the cell wall peptidoglycan by an amide bond.

Its subcellular location is the secreted. The protein resides in the cell wall. It is found in the membrane. It carries out the reaction Cleavage of Pro-|-Thr bond in the hinge region of the heavy chain of human IgA.. Functionally, zinc metalloproteinase which cleaves human immunoglobulin A1 (IgA1) in the hinge region, rendering it less efficient in coating the surface of colonizing or invading pneumococci. Strongly contributes to virulence in mice. May be responsible for pneumococcal infection and is potentially involved in distinct stages of pneumococcal disease. The polypeptide is Immunoglobulin A1 protease (iga) (Streptococcus pneumoniae serotype 4 (strain ATCC BAA-334 / TIGR4)).